Reading from the N-terminus, the 452-residue chain is MPLTVGLISLGCPKNLVDSEIMIGHLQKAGMTMTPEPELADVMVVNTCAFIDQAKQEAIDAILDIVRARENGAYPENQKLIVAGCLSQRFRKELPALLPEVDAFIGPDQITKLPEIITQVMDRTIQDRNFIEGKCRYVPDWNTPRYRLTPPHTAYIKIAEGCNHGCAYCIIPMIRGRHRSRSQQDVVREAETLIRSGVKEICLIAQDITYYGMDKWTDARPNRRSAVDSSRGESLASLLRALNAIEGEFWIRLLYTHPAHWSDELTAAIAECPKVARYVDIPLQHISDNMLDAMQRVTDGNYIRTLLRNIRKAVPGIAIRTTFITGFPGETEDDHQELMEFIEEFRFERAGIFTFSREEGTKAYKMPNQVHHRTKARRYNEATLLLARLASETGQEQIGRQIRVLVDAPGVARTEWDAPDIDGTVSVPLTLPVGQFATVTVTDAVAYELTAE.

In terms of domain architecture, MTTase N-terminal spans 3–122 (LTVGLISLGC…LPEIITQVMD (120 aa)). The [4Fe-4S] cluster site is built by Cys-12, Cys-48, Cys-85, Cys-162, Cys-166, and Cys-169. One can recognise a Radical SAM core domain in the interval 148-392 (LTPPHTAYIK…TLLLARLASE (245 aa)). The TRAM domain maps to 395-452 (QEQIGRQIRVLVDAPGVARTEWDAPDIDGTVSVPLTLPVGQFATVTVTDAVAYELTAE).

The protein belongs to the methylthiotransferase family. RimO subfamily. [4Fe-4S] cluster is required as a cofactor.

The protein resides in the cytoplasm. It catalyses the reaction L-aspartate(89)-[ribosomal protein uS12]-hydrogen + (sulfur carrier)-SH + AH2 + 2 S-adenosyl-L-methionine = 3-methylsulfanyl-L-aspartate(89)-[ribosomal protein uS12]-hydrogen + (sulfur carrier)-H + 5'-deoxyadenosine + L-methionine + A + S-adenosyl-L-homocysteine + 2 H(+). Functionally, catalyzes the methylthiolation of an aspartic acid residue of ribosomal protein uS12. This Akkermansia muciniphila (strain ATCC BAA-835 / DSM 22959 / JCM 33894 / BCRC 81048 / CCUG 64013 / CIP 107961 / Muc) protein is Ribosomal protein uS12 methylthiotransferase RimO.